Reading from the N-terminus, the 214-residue chain is Probable septum site-determining protein MinC (214 aa).

It belongs to the MinC family. As to quaternary structure, interacts with MinD and FtsZ.

Cell division inhibitor that blocks the formation of polar Z ring septums. Rapidly oscillates between the poles of the cell to destabilize FtsZ filaments that have formed before they mature into polar Z rings. Prevents FtsZ polymerization. This chain is Probable septum site-determining protein MinC, found in Caldanaerobacter subterraneus subsp. tengcongensis (strain DSM 15242 / JCM 11007 / NBRC 100824 / MB4) (Thermoanaerobacter tengcongensis).